The following is a 1513-amino-acid chain: Protein tincar (1513 aa).

Residues Met-1–Ser-77 lie on the Cytoplasmic side of the membrane. Residues Leu-78–Gly-98 traverse the membrane as a helical segment. The Extracellular portion of the chain corresponds to Ala-99 to Leu-120. Residues Gln-121–Phe-141 form a helical membrane-spanning segment. Residues Lys-142–Ala-181 lie on the Cytoplasmic side of the membrane. Residues Leu-182 to Leu-202 form a helical membrane-spanning segment. The Extracellular segment spans residues Leu-203–Ala-668. 3 disordered regions span residues Thr-247–Gly-266, Glu-354–Val-373, and Met-383–Arg-532. The segment covering Ala-427–Thr-466 has biased composition (low complexity). Positions Ser-478–Val-507 are enriched in basic residues. Over residues Thr-523 to Arg-532 the composition is skewed to basic and acidic residues. The chain crosses the membrane as a helical span at residues Glu-669–Trp-689. Over Asn-690 to Ala-696 the chain is Cytoplasmic. The chain crosses the membrane as a helical span at residues Cys-697–Ile-717. Residues Ser-718–Gly-736 are Extracellular-facing. Residues Leu-737–Ala-757 form a helical membrane-spanning segment. Residues Ser-758–Thr-787 are Cytoplasmic-facing. The chain crosses the membrane as a helical span at residues Trp-788–Ala-808. At Pro-809–Thr-826 the chain is on the extracellular side. A helical membrane pass occupies residues Phe-827–Leu-847. The Cytoplasmic segment spans residues Thr-848–His-1513. Low complexity-rich tracts occupy residues Ser-879–Gly-903 and Gln-1060–Gln-1071. Disordered regions lie at residues Ser-879 to Ala-913, Glu-1045 to Gly-1090, Ala-1115 to Gly-1155, Glu-1173 to His-1214, and Ala-1231 to Ala-1335. A compositionally biased stretch (pro residues) spans Pro-1122 to Val-1149. Low complexity-rich tracts occupy residues Leu-1179 to Gln-1208 and Thr-1255 to His-1285. Residues Ser-1286–Ile-1296 are compositionally biased toward basic and acidic residues. The span at Lys-1303 to Gln-1314 shows a compositional bias: pro residues. Positions Met-1324–Ala-1335 are enriched in polar residues.

As to expression, expression varies in tissues throughout development. At stage 5, expressed in the embryo dorsal region followed by expression in a striped pattern at stage 6. During gastrulation, expressed in ventral region and ventral nerve cord. Also detected in many neurons in the externa sensilla and chordotonal organ. At stage 16, expressed on the surface of the midgut. Additionally, expressed in a subset of cardioblasts (Tin+ subpopulation) during dorsal vessel formation. In third-instar larval tissues, expressed in the eye and antennal disks. In the antennal disks, expressed in the second antennal segments. In the eye disks, strongest expression found in the ocelli, and in the differentiating ommatidial cells. Also expressed in all cells within and in the vicinity of the morphogenetic furrow.

Its subcellular location is the membrane. Involved in eye morphogenesis. May be essential for the normal differentiation of ommatidial cells. In Drosophila melanogaster (Fruit fly), this protein is Protein tincar (tinc).